A 183-amino-acid chain; its full sequence is ATP synthase subunit delta (183 aa).

It belongs to the ATPase delta chain family. F-type ATPases have 2 components, F(1) - the catalytic core - and F(0) - the membrane proton channel. F(1) has five subunits: alpha(3), beta(3), gamma(1), delta(1), epsilon(1). F(0) has three main subunits: a(1), b(2) and c(10-14). The alpha and beta chains form an alternating ring which encloses part of the gamma chain. F(1) is attached to F(0) by a central stalk formed by the gamma and epsilon chains, while a peripheral stalk is formed by the delta and b chains.

Its subcellular location is the cell inner membrane. In terms of biological role, f(1)F(0) ATP synthase produces ATP from ADP in the presence of a proton or sodium gradient. F-type ATPases consist of two structural domains, F(1) containing the extramembraneous catalytic core and F(0) containing the membrane proton channel, linked together by a central stalk and a peripheral stalk. During catalysis, ATP synthesis in the catalytic domain of F(1) is coupled via a rotary mechanism of the central stalk subunits to proton translocation. This protein is part of the stalk that links CF(0) to CF(1). It either transmits conformational changes from CF(0) to CF(1) or is implicated in proton conduction. The sequence is that of ATP synthase subunit delta from Maridesulfovibrio salexigens (strain ATCC 14822 / DSM 2638 / NCIMB 8403 / VKM B-1763) (Desulfovibrio salexigens).